The primary structure comprises 2642 residues: Fusarielin synthase FSL1 (2642 aa).

The Ketosynthase family 3 (KS3) domain occupies 6–450 (NEPIAIIGTG…GTNAHAILEA (445 aa)). Catalysis depends on for beta-ketoacyl synthase activity residues C179, H318, and H370. The interval 566-890 (VFTGQGAQWA…PYTSALVRGK (325 aa)) is malonyl-CoA:ACP transacylase (MAT) domain. S659 functions as the For malonyltransferase activity in the catalytic mechanism. Positions 965–1101 (HDLLGIQTAD…GKVCIFLQTE (137 aa)) are N-terminal hotdog fold. Residues 965-1279 (HDLLGIQTAD…SFSPFAAATD (315 aa)) form a dehydratase (DH) domain region. The PKS/mFAS DH domain maps to 965-1280 (HDLLGIQTAD…FSPFAAATDR (316 aa)). Residue H997 is the Proton acceptor; for dehydratase activity of the active site. A C-terminal hotdog fold region spans residues 1126–1280 (MAGIDVERFY…FSPFAAATDR (155 aa)). D1189 serves as the catalytic Proton donor; for dehydratase activity. Residues 1423–1622 (NYLDRYYTHA…GVDTNTPMPD (200 aa)) form a methyltransferase (MET) domain region. The tract at residues 2244 to 2423 (TYWMLGLTGD…GHNAAVIDIS (180 aa)) is ketoreductase (KR) domain. In terms of domain architecture, Carrier spans 2556 to 2635 (QEVTSVLTSC…DLADYILESL (80 aa)). Residue S2595 is modified to O-(pantetheine 4'-phosphoryl)serine.

Pantetheine 4'-phosphate serves as cofactor.

The protein operates within secondary metabolite biosynthesis. Its function is as follows. Reducing polyketide synthase; part of the gene cluster that mediates the biosynthesis of fusarielins F, G and H, decaketide compounds with 5 methylations and a decaline core that act as mycoestrogens as they stimulate growth of MCF-7 breast cancer cells. The initial compound in the pathway is produced by the reducing polyketide synthase FSL1. FSL1 lacks an active enoyl reductase (ER) domain and biosynthesis of fusarielins relies on the trans-acting enoyl reductase FSL5, before it is released through hydrolysis catalyzed by the thioesterase FSL2. Fusarielins F, G, and H have a C11=C12 cis double bond and is fully reduced between C10 and C11 and between C12 and C13. FSL3 can be involved in the formation of the C11=C12 cis double bond by moving a hypothetical C10=C11 or C12=C13 trans double bond to form prefusarielin. Prefusarielin is oxygenated at C15 and C16 by the cytochrome P450 monooxygenase FSL4, resulting in fusarielin F, which subsequently is epoxidized into fusarielin G by the same enzyme. The final step in the pathway is a reduction of the carboxylic acid moiety to yield fusarielin H via a still undetermined mechanism. This Gibberella zeae (strain ATCC MYA-4620 / CBS 123657 / FGSC 9075 / NRRL 31084 / PH-1) (Wheat head blight fungus) protein is Fusarielin synthase FSL1.